We begin with the raw amino-acid sequence, 299 residues long: Probable lipid kinase YegS (299 aa).

Residues 2 to 133 (ANFPASLLIL…IDMARVNDKT (132 aa)) enclose the DAGKc domain. Residues Thr-40, 66 to 72 (GDGTINE), and Thr-95 contribute to the ATP site. Residues Leu-215, Asp-218, and Leu-220 each contribute to the Mg(2+) site. The active-site Proton acceptor is the Glu-271.

The protein belongs to the diacylglycerol/lipid kinase family. YegS lipid kinase subfamily. Mg(2+) is required as a cofactor. Ca(2+) serves as cofactor.

The protein localises to the cytoplasm. Probably phosphorylates lipids; the in vivo substrate is unknown. This Salmonella newport (strain SL254) protein is Probable lipid kinase YegS.